We begin with the raw amino-acid sequence, 265 residues long: tRNA pseudouridine synthase A (265 aa).

The active-site Nucleophile is D58. Residue Y116 participates in substrate binding.

Belongs to the tRNA pseudouridine synthase TruA family. Homodimer.

It catalyses the reaction uridine(38/39/40) in tRNA = pseudouridine(38/39/40) in tRNA. Formation of pseudouridine at positions 38, 39 and 40 in the anticodon stem and loop of transfer RNAs. The protein is tRNA pseudouridine synthase A of Neisseria gonorrhoeae (strain ATCC 700825 / FA 1090).